A 527-amino-acid chain; its full sequence is EGF domain-specific O-linked N-acetylglucosamine transferase (527 aa).

A signal peptide spans 1–17 (MLMLFVFGVLLHEVSLS). A Required for optimal activity motif is present at residues 295 to 297 (DYD). Residue asparagine 354 is glycosylated (N-linked (GlcNAc...) asparagine). Positions 524–527 (HDEL) match the Prevents secretion from ER motif.

This sequence belongs to the glycosyltransferase 61 family.

The protein resides in the endoplasmic reticulum lumen. It carries out the reaction L-seryl-[protein] + UDP-N-acetyl-alpha-D-glucosamine = 3-O-(N-acetyl-beta-D-glucosaminyl)-L-seryl-[protein] + UDP + H(+). It catalyses the reaction L-threonyl-[protein] + UDP-N-acetyl-alpha-D-glucosamine = 3-O-(N-acetyl-beta-D-glucosaminyl)-L-threonyl-[protein] + UDP + H(+). Functionally, catalyzes the transfer of a single N-acetylglucosamine from UDP-GlcNAc to a serine or threonine residue in extracellular proteins resulting in their modification with a beta-linked N-acetylglucosamine (O-GlcNAc). Specifically glycosylates the Thr residue located between the fifth and sixth conserved cysteines of folded EGF-like domains. The chain is EGF domain-specific O-linked N-acetylglucosamine transferase (EOGT) from Pan troglodytes (Chimpanzee).